We begin with the raw amino-acid sequence, 324 residues long: Cyclin-dependent kinase 1 (324 aa).

The Protein kinase domain maps to 4-307 (YQKIEKIGEG…AKQACMHPYF (304 aa)). ATP-binding positions include 10–18 (IGEGTYGVV) and Lys-34. Thr-14 carries the phosphothreonine modification. Tyr-15 carries the post-translational modification Phosphotyrosine. The active-site Proton acceptor is Asp-148. Thr-181 carries the post-translational modification Phosphothreonine; by CAK.

This sequence belongs to the protein kinase superfamily. CMGC Ser/Thr protein kinase family. CDC2/CDKX subfamily. In terms of assembly, forms a stable but non-covalent complex with a regulatory subunit (SUC1) and with a cyclin.

The enzyme catalyses L-seryl-[protein] + ATP = O-phospho-L-seryl-[protein] + ADP + H(+). It carries out the reaction L-threonyl-[protein] + ATP = O-phospho-L-threonyl-[protein] + ADP + H(+). Phosphorylation at Thr-14 or Tyr-15 inactivates the enzyme, while phosphorylation at Thr-181 activates it. In terms of biological role, cyclin-dependent kinase that acts as a master regulator of the mitotic and meiotic cell cycles. The sequence is that of Cyclin-dependent kinase 1 from Ajellomyces capsulatus (Darling's disease fungus).